The sequence spans 228 residues: Prepilin leader peptidase/N-methyltransferase (228 aa).

6 helical membrane passes run 18 to 38, 95 to 115, 116 to 136, 147 to 167, 168 to 188, and 204 to 224; these read LWGSFLFLSGLAFGSFFNVVI, RYPLMELATGALFVLAGYLMA, PGVPLLGGLILLSLLLILAAI, LTLPLMWAGLLFNLSATYVPL, AEAVVGAMAGYLSLWSVYWVF, and LLAALGAWLGWQALPQTLLLA.

The protein belongs to the peptidase A24 family.

The protein localises to the cell inner membrane. It carries out the reaction Typically cleaves a -Gly-|-Phe- bond to release an N-terminal, basic peptide of 5-8 residues from type IV prepilin, and then N-methylates the new N-terminal amino group, the methyl donor being S-adenosyl-L-methionine.. In terms of biological role, plays an essential role in type IV pili and type II pseudopili formation by proteolytically removing the leader sequence from substrate proteins and subsequently monomethylating the alpha-amino group of the newly exposed N-terminal phenylalanine. This chain is Prepilin leader peptidase/N-methyltransferase (pulO), found in Klebsiella pneumoniae.